We begin with the raw amino-acid sequence, 190 residues long: Nascent polypeptide-associated complex subunit alpha (190 aa).

Disordered stretches follow at residues 20 to 42 and 123 to 155; these read FDSD…AERK and SLQN…VDAK. The span at 30 to 40 shows a compositional bias: basic and acidic residues; sequence HASDKVASRAE. Positions 37–102 constitute an NAC-A/B domain; the sequence is SRAERKSRKA…AKAEDMSQLA (66 aa). Positions 138–151 are enriched in acidic residues; it reads EEEEDDDSPIDEEG. The 38-residue stretch at 152–189 folds into the UBA domain; sequence VDAKDIDLVMQQVSCSRRKAVKALKESNGDLINAIMNA.

The protein belongs to the NAC-alpha family. In terms of assembly, part of the nascent polypeptide-associated complex (NAC), consisting of EGD2 and EGD1. NAC associates with ribosomes via EGD1.

The protein localises to the cytoplasm. The protein resides in the nucleus. In terms of biological role, component of the nascent polypeptide-associated complex (NAC), a dynamic component of the ribosomal exit tunnel, protecting the emerging polypeptides from interaction with other cytoplasmic proteins to ensure appropriate nascent protein targeting. The NAC complex also promotes mitochondrial protein import by enhancing productive ribosome interactions with the outer mitochondrial membrane and blocks the inappropriate interaction of ribosomes translating non-secretory nascent polypeptides with translocation sites in the membrane of the endoplasmic reticulum. EGD2 may also be involved in transcription regulation. The protein is Nascent polypeptide-associated complex subunit alpha (EGD2) of Mycosarcoma maydis (Corn smut fungus).